Here is a 248-residue protein sequence, read N- to C-terminus: Exosome complex component Rrp41 (248 aa).

It belongs to the RNase PH family. Rrp41 subfamily. Component of the archaeal exosome complex. Forms a hexameric ring-like arrangement composed of 3 Rrp41-Rrp42 heterodimers. The hexameric ring associates with a trimer of Rrp4 and/or Csl4 subunits.

The protein resides in the cytoplasm. Functionally, catalytic component of the exosome, which is a complex involved in RNA degradation. Has 3'-&gt;5' exoribonuclease activity. Can also synthesize heteromeric RNA-tails. Binds RNA. This is Exosome complex component Rrp41 from Saccharolobus solfataricus (strain ATCC 35092 / DSM 1617 / JCM 11322 / P2) (Sulfolobus solfataricus).